The following is a 592-amino-acid chain: Craniofacial development protein 2 (592 aa).

Over residues 1 to 16 (MEEFDSKDISTSKDED) the composition is skewed to basic and acidic residues. 2 disordered regions span residues 1–225 (MEEF…KGQS) and 499–592 (VTNE…DCNN). Acidic residues predominate over residues 25–42 (HEDDINELVKEDEVDGEE). Composition is skewed to basic and acidic residues over residues 78 to 108 (SRESGGRIIEKEDAAAEQEKGAESEDARQEE) and 147 to 162 (KVEELEKPKKAEEVKL). Positions 175-184 (LTQQGRLSGR) are enriched in polar residues. 4 stretches are compositionally biased toward basic and acidic residues: residues 185–207 (TSEDEPRRSEGVQHATGEERRAD), 508–523 (EEAKSVLKQNEKEKPE), 552–562 (SVFKQDEKDKP), and 580–592 (EKCDLEKKKDCNN). Residues 499–578 (VTNEEDATNE…SVPSLPAGSG (80 aa)) form a hydrophilic region.

In terms of processing, phosphorylated by CK2 (casein kinase II) in vitro. Expressed in liver and lung with higher expression in brain.

It is found in the cytoplasm. It localises to the nucleus. In Bos taurus (Bovine), this protein is Craniofacial development protein 2 (CFDP2).